Consider the following 130-residue polypeptide: Ribosome-binding factor A (130 aa).

This sequence belongs to the RbfA family. Monomer. Binds 30S ribosomal subunits, but not 50S ribosomal subunits or 70S ribosomes.

It is found in the cytoplasm. One of several proteins that assist in the late maturation steps of the functional core of the 30S ribosomal subunit. Associates with free 30S ribosomal subunits (but not with 30S subunits that are part of 70S ribosomes or polysomes). Required for efficient processing of 16S rRNA. May interact with the 5'-terminal helix region of 16S rRNA. The sequence is that of Ribosome-binding factor A from Flavobacterium johnsoniae (strain ATCC 17061 / DSM 2064 / JCM 8514 / BCRC 14874 / CCUG 350202 / NBRC 14942 / NCIMB 11054 / UW101) (Cytophaga johnsonae).